Reading from the N-terminus, the 337-residue chain is LIX1-like protein (337 aa).

The disordered stretch occupies residues 1–64 (METMRAQRLQ…PLLLSGAPGL (64 aa)). Residues 26-38 (PGVTGAAAATATP) show a composition bias toward low complexity. Pro residues predominate over residues 39-56 (PAGPPPAPPPPAPPPPPL).

The protein belongs to the LIX1 family.

The polypeptide is LIX1-like protein (LIX1L) (Homo sapiens (Human)).